The primary structure comprises 141 residues: ATP synthase epsilon chain (141 aa).

The protein belongs to the ATPase epsilon chain family. As to quaternary structure, F-type ATPases have 2 components, CF(1) - the catalytic core - and CF(0) - the membrane proton channel. CF(1) has five subunits: alpha(3), beta(3), gamma(1), delta(1), epsilon(1). CF(0) has three main subunits: a, b and c.

The protein resides in the cell inner membrane. In terms of biological role, produces ATP from ADP in the presence of a proton gradient across the membrane. The chain is ATP synthase epsilon chain from Burkholderia ambifaria (strain ATCC BAA-244 / DSM 16087 / CCUG 44356 / LMG 19182 / AMMD) (Burkholderia cepacia (strain AMMD)).